The following is a 148-amino-acid chain: Nodulation protein NolJ (148 aa).

A compositionally biased stretch (acidic residues) spans 66-78 (ADEAMEETEEDAD). Disordered stretches follow at residues 66–93 (ADEAMEETEEDADALGGPRQEVRAVSDG) and 124–148 (AAKGAGAAVPGPNRRTGSGERRGYG). Residues 124–136 (AAKGAGAAVPGPN) show a composition bias toward low complexity.

Its function is as follows. Involved in efficiency of soybean nodulation and in nodulation delay. In Rhizobium fredii (Sinorhizobium fredii), this protein is Nodulation protein NolJ (nolJ).